The sequence spans 308 residues: tRNA dimethylallyltransferase (308 aa).

19–26 (GPTASGKS) is a binding site for ATP. 21 to 26 (TASGKS) contributes to the substrate binding site. The interval 44–47 (DSMQ) is interaction with substrate tRNA.

This sequence belongs to the IPP transferase family. Monomer. It depends on Mg(2+) as a cofactor.

The enzyme catalyses adenosine(37) in tRNA + dimethylallyl diphosphate = N(6)-dimethylallyladenosine(37) in tRNA + diphosphate. Catalyzes the transfer of a dimethylallyl group onto the adenine at position 37 in tRNAs that read codons beginning with uridine, leading to the formation of N6-(dimethylallyl)adenosine (i(6)A). In Methylobacterium radiotolerans (strain ATCC 27329 / DSM 1819 / JCM 2831 / NBRC 15690 / NCIMB 10815 / 0-1), this protein is tRNA dimethylallyltransferase.